The primary structure comprises 147 residues: Small ribosomal subunit protein uS12 (147 aa).

Belongs to the universal ribosomal protein uS12 family. Part of the 30S ribosomal subunit.

In terms of biological role, with S4 and S5 plays an important role in translational accuracy. Located at the interface of the 30S and 50S subunits. The sequence is that of Small ribosomal subunit protein uS12 from Pyrobaculum calidifontis (strain DSM 21063 / JCM 11548 / VA1).